A 699-amino-acid chain; its full sequence is UvrABC system protein B (699 aa).

Residues E35–M188 enclose the Helicase ATP-binding domain. An ATP-binding site is contributed by G48–S55. The Beta-hairpin signature appears at Y101–I124. One can recognise a Helicase C-terminal domain in the interval Q438–T604. The 36-residue stretch at V654–E689 folds into the UVR domain.

Belongs to the UvrB family. In terms of assembly, forms a heterotetramer with UvrA during the search for lesions. Interacts with UvrC in an incision complex.

Its subcellular location is the cytoplasm. The UvrABC repair system catalyzes the recognition and processing of DNA lesions. A damage recognition complex composed of 2 UvrA and 2 UvrB subunits scans DNA for abnormalities. Upon binding of the UvrA(2)B(2) complex to a putative damaged site, the DNA wraps around one UvrB monomer. DNA wrap is dependent on ATP binding by UvrB and probably causes local melting of the DNA helix, facilitating insertion of UvrB beta-hairpin between the DNA strands. Then UvrB probes one DNA strand for the presence of a lesion. If a lesion is found the UvrA subunits dissociate and the UvrB-DNA preincision complex is formed. This complex is subsequently bound by UvrC and the second UvrB is released. If no lesion is found, the DNA wraps around the other UvrB subunit that will check the other stand for damage. In Paenarthrobacter aurescens (strain TC1), this protein is UvrABC system protein B.